The primary structure comprises 497 residues: Probable FAD-binding monooxygenase AlmA (497 aa).

Residues 4 to 24 (QVDVLIIGAGISGIGLAVHLS) traverse the membrane as a helical segment. Positions 15, 36, 56, 62, and 104 each coordinate FAD. 54–56 (RSD) contacts NADP(+). Residues 184-190 (SGATAIT), 208-209 (RS), and 292-293 (RL) contribute to the NADP(+) site. Position 395 (V395) interacts with FAD.

This sequence belongs to the FAD-binding monooxygenase family. The cofactor is FAD.

It localises to the cell membrane. It participates in hydrocarbon metabolism; alkane degradation. Functionally, is involved in the degradation of n-alkanes with C chain lengths of 32 and longer. Allows Acinetobacter sp. strain DSM 17874 to grow on long-chain n-alkanes such as dotriacontane (C32H66) or hexatriacontane (C36H74) as a sole carbon source. The protein is Probable FAD-binding monooxygenase AlmA of Acinetobacter sp.